Consider the following 296-residue polypeptide: Putative thiosulfate sulfurtransferase SseA (296 aa).

2 Rhodanese domains span residues Gly31–Leu138 and Ile168–Thr286. The Cysteine persulfide intermediate role is filled by Cys245. A substrate-binding site is contributed by Arg250.

The catalysed reaction is thiosulfate + hydrogen cyanide = thiocyanate + sulfite + 2 H(+). The sequence is that of Putative thiosulfate sulfurtransferase SseA (sseA) from Mycobacterium leprae (strain TN).